The sequence spans 281 residues: 16S rRNA (guanine(1405)-N(7))-methyltransferase (281 aa).

S-adenosyl-L-methionine-binding positions include Tyr-60, 105-107 (HTS), Arg-111, Gly-136, Asp-160, 186-187 (QG), Phe-203, and Gln-212.

Belongs to the methyltransferase superfamily. Aminoglycoside resistance family.

The enzyme catalyses guanosine(1405) in 16S rRNA + S-adenosyl-L-methionine = N(7)-methylguanosine(1405) in 16S rRNA + S-adenosyl-L-homocysteine. Its function is as follows. Specifically methylates the N(7) position of guanine 1405 in 16S rRNA. Confers resistance to various aminoglycosides, including gentamicin and kanamycin. This is 16S rRNA (guanine(1405)-N(7))-methyltransferase (rmtC) from Proteus mirabilis.